A 310-amino-acid polypeptide reads, in one-letter code: p-hydroxybenzoic acid efflux pump subunit AaeA (310 aa).

A helical transmembrane segment spans residues 12-32; that stretch reads AITVVLVVLAFIAIFRAWSFY.

It belongs to the membrane fusion protein (MFP) (TC 8.A.1) family.

The protein resides in the cell inner membrane. In terms of biological role, forms an efflux pump with AaeB. The protein is p-hydroxybenzoic acid efflux pump subunit AaeA of Cronobacter sakazakii (strain ATCC BAA-894) (Enterobacter sakazakii).